Consider the following 160-residue polypeptide: Calcium-binding protein CP1 (160 aa).

3 consecutive EF-hand domains span residues 22 to 49, 52 to 87, and 93 to 128; these read AFEIIDTDHDGKISSDDLRAFYAGIPSG, NDETMIGTMISVADANKDGFVEFDEFEKVLETTPFS, and GDDGLMKDVFKVMDKDGDGRLSYGDLKSYMDSAGLA. Ca(2+)-binding residues include D27, D29, D31, K33, D38, D65, N67, D69, E76, D106, D108, D110, R112, and D117.

In terms of tissue distribution, expressed in roots and flowers.

The protein resides in the cytoplasm. The protein localises to the cytosol. Functionally, binds calcium in vitro. In Arabidopsis thaliana (Mouse-ear cress), this protein is Calcium-binding protein CP1.